Consider the following 634-residue polypeptide: Acetylcholinesterase (634 aa).

A signal peptide spans 1–23 (MKTSDILLLPTVLLTFLFHNCFA). Residues C91 and C118 are joined by a disulfide bond. 2 N-linked (GlcNAc...) asparagine glycosylation sites follow: N133 and N184. Residue S225 is the Acyl-ester intermediate of the active site. The cysteines at positions 279 and 290 are disulfide-linked. A glycan (N-linked (GlcNAc...) asparagine) is linked at N283. Residue E352 is the Charge relay system of the active site. Residue N368 is glycosylated (N-linked (GlcNAc...) asparagine). C427 and C580 are disulfide-bonded. H495 (charge relay system) is an active-site residue. N512 and N592 each carry an N-linked (GlcNAc...) asparagine glycan.

Belongs to the type-B carboxylesterase/lipase family. As to quaternary structure, dimers and collagen-tailed forms, in which catalytic tetramers are associated with anchoring proteins that attach them to the basal lamina or to cell membranes. In the collagen-tailed forms, subunits are associated with a specific collagen, COLQ, which triggers the formation of isoform T tetramers from dimers.

It is found in the synapse. The protein resides in the secreted. Its subcellular location is the cell membrane. The enzyme catalyses acetylcholine + H2O = choline + acetate + H(+). Its function is as follows. Terminates signal transduction at the neuromuscular junction by rapid hydrolysis of the acetylcholine released into the synaptic cleft. The sequence is that of Acetylcholinesterase (ache) from Danio rerio (Zebrafish).